The chain runs to 387 residues: Putative purine permease 15 (387 aa).

10 helical membrane passes run 44–64 (WVTI…ARLL), 84–104 (TLLQ…HFLI), 122–142 (LAIT…FSDV), 150–169 (VFTL…SKYY), 179–199 (FISL…FSAG), 210–230 (YGII…LCII), 252–272 (FVVV…ILVA), 306–326 (VAWQ…SAVF), 329–349 (VISV…YNTH), and 354–374 (VFRG…IYII).

This sequence belongs to the purine permeases (TC 2.A.7.14) family.

It localises to the membrane. The sequence is that of Putative purine permease 15 (PUP15) from Arabidopsis thaliana (Mouse-ear cress).